The chain runs to 1099 residues: Carbamoyl phosphate synthase large chain (1099 aa).

Residues 1 to 402 (MPKRTDLKSV…ALQKALRSLE (402 aa)) form a carboxyphosphate synthetic domain region. ATP is bound by residues arginine 129, arginine 169, glycine 175, glycine 176, glutamate 208, isoleucine 210, glutamate 215, glycine 241, valine 242, histidine 243, glutamine 285, and glutamate 299. The region spanning 133–328 (KGVVERCGAE…IAKIATKLSL (196 aa)) is the ATP-grasp 1 domain. Residues glutamine 285, glutamate 299, and asparagine 301 each contribute to the Mg(2+) site. Glutamine 285, glutamate 299, and asparagine 301 together coordinate Mn(2+). An oligomerization domain region spans residues 403–546 (QKGSQLDFSH…YHYSSYDEED (144 aa)). Residues 547-950 (EVALHSKPSI…AFAKSQAAAN (404 aa)) form a carbamoyl phosphate synthetic domain region. Residues 677–868 (SRVLDEAGLI…MAKAAALIGT (192 aa)) form the ATP-grasp 2 domain. Positions 713, 752, 754, 759, 784, 785, 786, 787, 827, and 839 each coordinate ATP. Mg(2+) contacts are provided by glutamine 827, glutamate 839, and asparagine 841. Glutamine 827, glutamate 839, and asparagine 841 together coordinate Mn(2+). Residues 951 to 1099 (NALPTEGKIF…AENLKALQNG (149 aa)) enclose the MGS-like domain. The allosteric domain stretch occupies residues 951–1099 (NALPTEGKIF…AENLKALQNG (149 aa)).

The protein belongs to the CarB family. In terms of assembly, composed of two chains; the small (or glutamine) chain promotes the hydrolysis of glutamine to ammonia, which is used by the large (or ammonia) chain to synthesize carbamoyl phosphate. Tetramer of heterodimers (alpha,beta)4. Mg(2+) is required as a cofactor. Requires Mn(2+) as cofactor.

It catalyses the reaction hydrogencarbonate + L-glutamine + 2 ATP + H2O = carbamoyl phosphate + L-glutamate + 2 ADP + phosphate + 2 H(+). It carries out the reaction hydrogencarbonate + NH4(+) + 2 ATP = carbamoyl phosphate + 2 ADP + phosphate + 2 H(+). It participates in amino-acid biosynthesis; L-arginine biosynthesis; carbamoyl phosphate from bicarbonate: step 1/1. It functions in the pathway pyrimidine metabolism; UMP biosynthesis via de novo pathway; (S)-dihydroorotate from bicarbonate: step 1/3. Large subunit of the glutamine-dependent carbamoyl phosphate synthetase (CPSase). CPSase catalyzes the formation of carbamoyl phosphate from the ammonia moiety of glutamine, carbonate, and phosphate donated by ATP, constituting the first step of 2 biosynthetic pathways, one leading to arginine and/or urea and the other to pyrimidine nucleotides. The large subunit (synthetase) binds the substrates ammonia (free or transferred from glutamine from the small subunit), hydrogencarbonate and ATP and carries out an ATP-coupled ligase reaction, activating hydrogencarbonate by forming carboxy phosphate which reacts with ammonia to form carbamoyl phosphate. This is Carbamoyl phosphate synthase large chain from Arthrobacter sp. (strain FB24).